A 505-amino-acid polypeptide reads, in one-letter code: Lysine--tRNA ligase (505 aa).

Residues Glu-415 and Glu-422 each coordinate Mg(2+).

It belongs to the class-II aminoacyl-tRNA synthetase family. Homodimer. Mg(2+) is required as a cofactor.

Its subcellular location is the cytoplasm. It catalyses the reaction tRNA(Lys) + L-lysine + ATP = L-lysyl-tRNA(Lys) + AMP + diphosphate. The polypeptide is Lysine--tRNA ligase (Citrobacter koseri (strain ATCC BAA-895 / CDC 4225-83 / SGSC4696)).